We begin with the raw amino-acid sequence, 245 residues long: Enolase-phosphatase E1 (245 aa).

Belongs to the HAD-like hydrolase superfamily. MasA/MtnC family. As to quaternary structure, monomer. It depends on Mg(2+) as a cofactor.

It catalyses the reaction 5-methylsulfanyl-2,3-dioxopentyl phosphate + H2O = 1,2-dihydroxy-5-(methylsulfanyl)pent-1-en-3-one + phosphate. It participates in amino-acid biosynthesis; L-methionine biosynthesis via salvage pathway; L-methionine from S-methyl-5-thio-alpha-D-ribose 1-phosphate: step 3/6. It functions in the pathway amino-acid biosynthesis; L-methionine biosynthesis via salvage pathway; L-methionine from S-methyl-5-thio-alpha-D-ribose 1-phosphate: step 4/6. Functionally, bifunctional enzyme that catalyzes the enolization of 2,3-diketo-5-methylthiopentyl-1-phosphate (DK-MTP-1-P) into the intermediate 2-hydroxy-3-keto-5-methylthiopentenyl-1-phosphate (HK-MTPenyl-1-P), which is then dephosphorylated to form the acireductone 1,2-dihydroxy-3-keto-5-methylthiopentene (DHK-MTPene). This is Enolase-phosphatase E1 from Prochlorococcus marinus (strain MIT 9313).